We begin with the raw amino-acid sequence, 396 residues long: Acetyl-CoA acetyltransferase (396 aa).

Cys-89 acts as the Acyl-thioester intermediate in catalysis. Residues Arg-223–Ser-225 and Ser-249 each bind CoA. Active-site proton acceptor residues include His-352 and Cys-382.

This sequence belongs to the thiolase-like superfamily. Thiolase family.

The protein localises to the cytoplasm. It catalyses the reaction 2 acetyl-CoA = acetoacetyl-CoA + CoA. It participates in lipid metabolism; butanoate metabolism. In terms of biological role, involved in syntrophic growth of S.wolfei with butyrate, as part of the butyrate oxidation pathway. Probably catalyzes the beta-keto thiolysis of acetoacetyl-CoA, leading to 2 acetyl-CoA molecules. The sequence is that of Acetyl-CoA acetyltransferase from Syntrophomonas wolfei subsp. wolfei (strain DSM 2245B / Goettingen).